The following is a 607-amino-acid chain: Elongation factor 4 (607 aa).

Residues 11 to 193 (SKIRNFSIIA…QIVEKVPAPT (183 aa)) enclose the tr-type G domain. GTP contacts are provided by residues 23 to 28 (DHGKST) and 140 to 143 (NKID).

It belongs to the TRAFAC class translation factor GTPase superfamily. Classic translation factor GTPase family. LepA subfamily.

Its subcellular location is the cell membrane. It catalyses the reaction GTP + H2O = GDP + phosphate + H(+). In terms of biological role, required for accurate and efficient protein synthesis under certain stress conditions. May act as a fidelity factor of the translation reaction, by catalyzing a one-codon backward translocation of tRNAs on improperly translocated ribosomes. Back-translocation proceeds from a post-translocation (POST) complex to a pre-translocation (PRE) complex, thus giving elongation factor G a second chance to translocate the tRNAs correctly. Binds to ribosomes in a GTP-dependent manner. In Bacillus mycoides (strain KBAB4) (Bacillus weihenstephanensis), this protein is Elongation factor 4.